The following is a 506-amino-acid chain: tRNA (guanine(6)-N(2))-methyltransferase THUMP3 (506 aa).

Positions 144 to 172 (KTKRRKLNPNSSKQKIDNGRGDTTVEKDV) are disordered. Positions 157–172 (QKIDNGRGDTTVEKDV) are enriched in basic and acidic residues. Residues 170 to 286 (KDVKKELTNS…DNEVVVGIAL (117 aa)) form the THUMP domain.

The protein belongs to the methyltransferase superfamily. In terms of assembly, part of the heterodimeric THUMPD3-TRM112 methyltransferase complex; this complex forms an active tRNA methyltransferase, where TRMT112 acts as an activator of the catalytic subunit THUMPD3.

It is found in the cytoplasm. It carries out the reaction guanosine(6) in tRNA + S-adenosyl-L-methionine = N(2)-methylguanosine(6) in tRNA + S-adenosyl-L-homocysteine + H(+). It catalyses the reaction guanosine(7) in tRNA + S-adenosyl-L-methionine = N(2)-methylguanosine(7) in tRNA + S-adenosyl-L-homocysteine + H(+). Functionally, catalytic subunit of the THUMPD3-TRM112 methyltransferase complex, that specifically mediates the S-adenosyl-L-methionine-dependent N(2)-methylation of guanosine nucleotide at position 6 (m2G6) in tRNAs. This is one of the major tRNA (guanine-N(2))-methyltransferases. Also catalyzes the S-adenosyl-L-methionine-dependent N(2)-methylation of guanosine nucleotide at position 7 of tRNA(Trp). The sequence is that of tRNA (guanine(6)-N(2))-methyltransferase THUMP3 from Bos taurus (Bovine).